A 280-amino-acid chain; its full sequence is uncharacterized protein (280 aa).

3 to 29 (KKIAIVTGASSGFGLLAAVKLARSFFV) provides a ligand contact to NADP(+). Ser-139 serves as a coordination point for substrate. The active-site Proton acceptor is Tyr-152.

This sequence belongs to the short-chain dehydrogenases/reductases (SDR) family.

This is an uncharacterized protein from Bacillus subtilis (strain 168).